A 360-amino-acid chain; its full sequence is Lactosylceramide 4-alpha-galactosyltransferase (360 aa).

Topologically, residues 1–30 are cytoplasmic; the sequence is MGISRSDLEETMSKPPDCLPRMLRGTPRQR. Residues 31–51 traverse the membrane as a helical; Signal-anchor for type II membrane protein segment; the sequence is VFTLFIISFKFTFLVSILIYW. At 52 to 360 the chain is on the lumenal side; sequence HTVGAPKDQR…TTHRAMTMYL (309 aa). The DXD motif signature appears at 199 to 201; that stretch reads DTD. Asn-210 and Asn-316 each carry an N-linked (GlcNAc...) asparagine glycan.

It belongs to the glycosyltransferase 32 family. As to expression, ubiquitous. Highly expressed in kidney, mesenteric lymph node, spleen and brain.

The protein resides in the golgi apparatus membrane. It catalyses the reaction a beta-D-Gal-(1-&gt;4)-beta-D-Glc-(1&lt;-&gt;1)-Cer(d18:1(4E)) + UDP-alpha-D-galactose = a globoside Gb3Cer (d18:1(4E)) + UDP + H(+). The enzyme catalyses a beta-D-Gal-(1&lt;-&gt;1')-ceramide + UDP-alpha-D-galactose = alpha-D-Gal-(1-&gt;4)-beta-D-Gal-(1&lt;-&gt;1')-Cer + UDP + H(+). Its pathway is glycolipid biosynthesis. In terms of biological role, catalyzes the transfer of galactose from UDP-alpha-D-galactose to lactosylceramide/beta-D-galactosyl-(1-&gt;4)-beta-D-glucosyl-(1&lt;-&gt;1)-ceramide(d18:1(4E)) to produce globotriaosylceramide/globoside Gb3Cer (d18:1(4E)). Also able to transfer galactose to galactosylceramide/beta-D-Gal-(1&lt;-&gt;1')-Cer. Globoside Gb3Cer is a glycosphingolipid of the globo serie, one of the major types of neutral root structures of glycosphingolipids, that constitute a significant portion of mammalian cell membranes. The protein is Lactosylceramide 4-alpha-galactosyltransferase of Rattus norvegicus (Rat).